Here is a 298-residue protein sequence, read N- to C-terminus: MDKGTSFFTTPSFSATTRAIFNTMPQWFSFAVGLLIAYPLLINSLRYRRLKQLQKKFYFPTRESMAKMTDEEAFQIQKETAQLEFPFMFVKAGQFALFRTYGIPTISHLLIKTGQFSKPETSFKRYTDTAALIGEMVENSPTSQRAFLSVARTRFLHSGYQASGKILDTDLLYTLALFAVQPVNFIAAFEWRPLSDLERCAIGTFWKSLGDALGISSDILPSGKTGFRDGIHWLEEVDTWSQEYEVKYMVPDAQNRESADQATAVLLYNLPKVFHPVGLQFTSFMMDDRLRKAMLYVE.

At 1 to 24 (MDKGTSFFTTPSFSATTRAIFNTM) the chain is on the lumenal side. Residues 25-45 (PQWFSFAVGLLIAYPLLINSL) form a helical membrane-spanning segment. Residues 46–298 (RYRRLKQLQK…RLRKAMLYVE (253 aa)) lie on the Cytoplasmic side of the membrane.

The protein belongs to the mpaB oxygenase family.

The protein resides in the endoplasmic reticulum membrane. It catalyses the reaction 4-farnesyl-3,5-dihydroxy-6-methylphthalide + AH2 + 2 O2 = (4E,8E)-10-(4,6-dihydroxy-7-methyl-3-oxo-1,3-dihydro-2-benzofuran-5-yl)-4,8-dimethyldeca-4,8-dienoate + acetone + A + H2O + H(+). It functions in the pathway secondary metabolite biosynthesis; terpenoid biosynthesis. In terms of biological role, ER-bound oxygenase; part of the gene cluster that mediates the biosynthesis of mycophenolic acid (MPA), the first isolated antibiotic natural product in the world obtained from a culture of Penicillium brevicompactum in 1893. MpaB catalyzes the oxidative cleavage the C19-C20 double bond in farnesyl-DHMP (FDHMP) to yield FDHMP-3C via a mycophenolic aldehyde intermediate. The first step of the pathway is the synthesis of 5-methylorsellinic acid (5MOA) by the cytosolic polyketide synthase mpaC. 5MOA is then converted to the phthalide compound 5,7-dihydroxy-4,6-dimethylphthalide (DHMP) by the endoplasmic reticulum-bound cytochrome P450 monooxygenase mpaDE. MpaDE first catalyzes hydroxylation of 5-MOA to 4,6-dihydroxy-2-(hydroxymethyl)-3-methylbenzoic acid (DHMB). MpaDE then acts as a lactone synthase that catalyzes the ring closure to convert DHMB into DHMP. The next step is the prenylation of DHMP by the Golgi apparatus-associated prenyltransferase mpaA to yield farnesyl-DHMP (FDHMP). The ER-bound oxygenase mpaB then mediates the oxidative cleavage the C19-C20 double bond in FDHMP to yield FDHMP-3C via a mycophenolic aldehyde intermediate. The O-methyltransferase mpaG catalyzes the methylation of FDHMP-3C to yield MFDHMP-3C. After the cytosolic methylation of FDHMP-3C, MFDHMP-3C enters into peroxisomes probably via free diffusion due to its low molecular weight. Upon a peroxisomal CoA ligation reaction, catalyzed by a beta-oxidation component enzyme acyl-CoA ligase ACL891, MFDHMP-3C-CoA would then be restricted to peroxisomes for the following beta-oxidation pathway steps. The peroxisomal beta-oxidation machinery than converts MFDHMP-3C-CoA into MPA_CoA, via a beta-oxidation chain-shortening process. Finally mpaH acts as a peroxisomal acyl-CoA hydrolase with high substrate specificity toward MPA-CoA to release the final product MPA. This Penicillium roqueforti (strain FM164) protein is ER-bound oxygenase mpaB.